The chain runs to 95 residues: Large ribosomal subunit protein bL31 (95 aa).

Residues 68–95 are disordered; it reads AGLNNINKKPEKKKIQGKSEPRKSLNEL. The segment covering 80–95 has biased composition (basic and acidic residues); sequence KKIQGKSEPRKSLNEL.

This sequence belongs to the bacterial ribosomal protein bL31 family. Type A subfamily. In terms of assembly, part of the 50S ribosomal subunit.

Binds the 23S rRNA. In Ureaplasma parvum serovar 3 (strain ATCC 700970), this protein is Large ribosomal subunit protein bL31.